The primary structure comprises 430 residues: Phosphomethylpyrimidine synthase (430 aa).

Substrate is bound by residues N67, M96, Y125, H161, 183–185 (SRG), 224–227 (DALR), and E263. Residue H267 participates in Zn(2+) binding. A substrate-binding site is contributed by Y290. Residue H331 coordinates Zn(2+). 3 residues coordinate [4Fe-4S] cluster: C406, C409, and C413.

This sequence belongs to the ThiC family. As to quaternary structure, homodimer. It depends on [4Fe-4S] cluster as a cofactor.

The catalysed reaction is 5-amino-1-(5-phospho-beta-D-ribosyl)imidazole + S-adenosyl-L-methionine = 4-amino-2-methyl-5-(phosphooxymethyl)pyrimidine + CO + 5'-deoxyadenosine + formate + L-methionine + 3 H(+). Its pathway is cofactor biosynthesis; thiamine diphosphate biosynthesis. Functionally, catalyzes the synthesis of the hydroxymethylpyrimidine phosphate (HMP-P) moiety of thiamine from aminoimidazole ribotide (AIR) in a radical S-adenosyl-L-methionine (SAM)-dependent reaction. This Campylobacter jejuni subsp. jejuni serotype O:23/36 (strain 81-176) protein is Phosphomethylpyrimidine synthase.